Consider the following 225-residue polypeptide: Recoverin family protein DDB_G0274781 (225 aa).

Residues 1-13 show a composition bias toward low complexity; sequence MGNKQGKSPNNSK. Residues 1–20 form a disordered region; the sequence is MGNKQGKSPNNSKGGKKYKI. The N-myristoyl glycine moiety is linked to residue glycine 2. EF-hand domains lie at 78 to 113, 114 to 149, and 174 to 209; these read DNSP…LCKG, TAEE…AWIS, and MAQI…HPKI. Positions 91, 93, 95, 97, 102, 127, 129, 131, 133, 138, 187, 189, 191, 193, and 198 each coordinate Ca(2+).

Belongs to the recoverin family.

This chain is Recoverin family protein DDB_G0274781, found in Dictyostelium discoideum (Social amoeba).